A 226-amino-acid polypeptide reads, in one-letter code: Ribonuclease 3 (226 aa).

The RNase III domain occupies 6-128; the sequence is INRLQRKLGY…LIGGVFLDSN (123 aa). Glu41 is a Mg(2+) binding site. Asp45 is an active-site residue. Mg(2+) is bound by residues Asp114 and Glu117. Glu117 is an active-site residue. Positions 155–225 constitute a DRBM domain; it reads DPKTRLQEYL…AEQALKKLEL (71 aa).

It belongs to the ribonuclease III family. In terms of assembly, homodimer. Mg(2+) is required as a cofactor.

The protein localises to the cytoplasm. It carries out the reaction Endonucleolytic cleavage to 5'-phosphomonoester.. Functionally, digests double-stranded RNA. Involved in the processing of primary rRNA transcript to yield the immediate precursors to the large and small rRNAs (23S and 16S). Processes some mRNAs, and tRNAs when they are encoded in the rRNA operon. Processes pre-crRNA and tracrRNA of type II CRISPR loci if present in the organism. The protein is Ribonuclease 3 of Salmonella enteritidis PT4 (strain P125109).